The following is a 153-amino-acid chain: D-aminoacyl-tRNA deacylase (153 aa).

The Gly-cisPro motif, important for rejection of L-amino acids signature appears at Gly140–Pro141.

It belongs to the DTD family. As to quaternary structure, homodimer.

The protein resides in the cytoplasm. It carries out the reaction glycyl-tRNA(Ala) + H2O = tRNA(Ala) + glycine + H(+). The catalysed reaction is a D-aminoacyl-tRNA + H2O = a tRNA + a D-alpha-amino acid + H(+). An aminoacyl-tRNA editing enzyme that deacylates mischarged D-aminoacyl-tRNAs. Also deacylates mischarged glycyl-tRNA(Ala), protecting cells against glycine mischarging by AlaRS. Acts via tRNA-based rather than protein-based catalysis; rejects L-amino acids rather than detecting D-amino acids in the active site. By recycling D-aminoacyl-tRNA to D-amino acids and free tRNA molecules, this enzyme counteracts the toxicity associated with the formation of D-aminoacyl-tRNA entities in vivo and helps enforce protein L-homochirality. This is D-aminoacyl-tRNA deacylase from Trichodesmium erythraeum (strain IMS101).